Consider the following 406-residue polypeptide: Tyrosine--tRNA ligase (406 aa).

Tyr-35 provides a ligand contact to L-tyrosine. The 'HIGH' region motif lies at Pro-40–His-49. The L-tyrosine site is built by Tyr-168 and Gln-172. Positions Lys-228–Thr-232 match the 'KMSKS' region motif. Lys-231 is a binding site for ATP. The S4 RNA-binding domain maps to Ala-340 to Val-404.

This sequence belongs to the class-I aminoacyl-tRNA synthetase family. TyrS type 1 subfamily. As to quaternary structure, homodimer.

The protein localises to the cytoplasm. It catalyses the reaction tRNA(Tyr) + L-tyrosine + ATP = L-tyrosyl-tRNA(Tyr) + AMP + diphosphate + H(+). In terms of biological role, catalyzes the attachment of tyrosine to tRNA(Tyr) in a two-step reaction: tyrosine is first activated by ATP to form Tyr-AMP and then transferred to the acceptor end of tRNA(Tyr). This chain is Tyrosine--tRNA ligase, found in Clostridium perfringens (strain 13 / Type A).